Here is a 410-residue protein sequence, read N- to C-terminus: Regulator of microtubule dynamics protein 2 (410 aa).

Residues 9–28 (LILGIMVGTAGISLLLLWYH) traverse the membrane as a helical segment. Ser51 is subject to Phosphoserine. The stretch at 68–110 (FQERQLQILEKLNELLTNMEELKEEIRFLKEAIPKLEEYIQDE) forms a coiled coil. Phosphoserine is present on Ser121. Positions 122–131 (PQHRARKRRL) are enriched in basic residues. The disordered stretch occupies residues 122 to 164 (PQHRARKRRLPTIQSSATSNSSEEAESEGGYITANTDTEEQSF). Residue Thr139 is modified to Phosphothreonine. Tyr152 bears the Phosphotyrosine mark. Phosphothreonine is present on residues Thr154 and Thr157.

It belongs to the RMDN family. Interacts with microtubules.

Its subcellular location is the membrane. The protein resides in the cytoplasm. It localises to the cytoskeleton. It is found in the spindle. The protein localises to the spindle pole. This is Regulator of microtubule dynamics protein 2 (RMDN2) from Homo sapiens (Human).